Here is a 284-residue protein sequence, read N- to C-terminus: D-tagatose-1,6-bisphosphate aldolase subunit GatY (284 aa).

Residue aspartate 82 is the Proton donor of the active site. Zn(2+) contacts are provided by histidine 83 and histidine 180. Glycine 181 is a dihydroxyacetone phosphate binding site. A Zn(2+)-binding site is contributed by histidine 208. Residues 209–211 and 230–233 each bind dihydroxyacetone phosphate; these read GAS and NVAT.

This sequence belongs to the class II fructose-bisphosphate aldolase family. TagBP aldolase GatY subfamily. Forms a complex with GatZ. Zn(2+) serves as cofactor.

It carries out the reaction D-tagatofuranose 1,6-bisphosphate = D-glyceraldehyde 3-phosphate + dihydroxyacetone phosphate. It functions in the pathway carbohydrate metabolism; D-tagatose 6-phosphate degradation; D-glyceraldehyde 3-phosphate and glycerone phosphate from D-tagatose 6-phosphate: step 2/2. Functionally, catalytic subunit of the tagatose-1,6-bisphosphate aldolase GatYZ, which catalyzes the reversible aldol condensation of dihydroxyacetone phosphate (DHAP or glycerone-phosphate) with glyceraldehyde 3-phosphate (G3P) to produce tagatose 1,6-bisphosphate (TBP). Requires GatZ subunit for full activity and stability. Is involved in the catabolism of galactitol. The protein is D-tagatose-1,6-bisphosphate aldolase subunit GatY of Escherichia coli O7:K1 (strain IAI39 / ExPEC).